A 143-amino-acid polypeptide reads, in one-letter code: MAIERTFSIIKPNAVAKNVIGNIFARFEAAGFKIVGTKMLHLTVEQARGFYAEHDGKPFFDGLVEFMTSGPIVVSVLESENAVQRHRDLLGATNPANALAGTLRADYADSFTENGTHGSDSLESAQREIAYFFGEGEVCPRTR.

The ATP site is built by Lys11, Phe59, Arg87, Thr93, Arg104, and Asn114. Residue His117 is the Pros-phosphohistidine intermediate of the active site.

Belongs to the NDK family. Homotetramer. The cofactor is Mg(2+).

The protein localises to the cytoplasm. It catalyses the reaction a 2'-deoxyribonucleoside 5'-diphosphate + ATP = a 2'-deoxyribonucleoside 5'-triphosphate + ADP. It carries out the reaction a ribonucleoside 5'-diphosphate + ATP = a ribonucleoside 5'-triphosphate + ADP. In terms of biological role, major role in the synthesis of nucleoside triphosphates other than ATP. The ATP gamma phosphate is transferred to the NDP beta phosphate via a ping-pong mechanism, using a phosphorylated active-site intermediate. The sequence is that of Nucleoside diphosphate kinase from Citrobacter koseri (strain ATCC BAA-895 / CDC 4225-83 / SGSC4696).